Reading from the N-terminus, the 137-residue chain is Proofreading thioesterase EntH (137 aa).

Glutamate 63 functions as the Nucleophile or proton acceptor in the catalytic mechanism.

The protein belongs to the thioesterase PaaI family. In terms of assembly, homotetramer. Dimer of dimers. Interacts specifically with the aryl carrier protein (ArCP) domain of EntB.

The protein localises to the cytoplasm. It functions in the pathway siderophore biosynthesis; enterobactin biosynthesis. Required for optimal enterobactin synthesis. Acts as a proofreading enzyme that prevents EntB misacylation by hydrolyzing the thioester bound existing between EntB and wrongly charged molecules. This is Proofreading thioesterase EntH from Cronobacter sakazakii (strain ATCC BAA-894) (Enterobacter sakazakii).